Here is a 324-residue protein sequence, read N- to C-terminus: NADH-ubiquinone oxidoreductase chain 1 (324 aa).

A run of 8 helical transmembrane segments spans residues 10 to 30 (MIMT…LTLV), 76 to 96 (FLFI…WIPL), 107 to 127 (LGLL…LWSG), 143 to 163 (VAQT…TIML), 178 to 198 (PIYL…STLA), 229 to 249 (LFFL…ITLF), 260 to 280 (ELFS…FLWV), and 300 to 320 (FLPL…SYAG).

The protein belongs to the complex I subunit 1 family.

Its subcellular location is the mitochondrion inner membrane. The enzyme catalyses a ubiquinone + NADH + 5 H(+)(in) = a ubiquinol + NAD(+) + 4 H(+)(out). Core subunit of the mitochondrial membrane respiratory chain NADH dehydrogenase (Complex I) that is believed to belong to the minimal assembly required for catalysis. Complex I functions in the transfer of electrons from NADH to the respiratory chain. The immediate electron acceptor for the enzyme is believed to be ubiquinone. The polypeptide is NADH-ubiquinone oxidoreductase chain 1 (MT-ND1) (Excalfactoria chinensis (Blue-breasted quail)).